The primary structure comprises 158 residues: Cytochrome b562 (158 aa).

A run of 4 helical transmembrane segments spans residues 12–32 (ITLHWAIAGLVLFNYIFGETM), 46–66 (AGVGHYLHVVVGLAVLVLTLV), 87–107 (VAAGLQGLLYLLTLLVPALGM), and 121–141 (HVLAANAIMLLALVHAVSALF). Positions 15 and 53 each coordinate heme b. The heme b site is built by H121 and H135.

Belongs to the cytochrome b561 family. In terms of assembly, homodimer. It depends on heme b as a cofactor.

The protein localises to the cell membrane. In terms of biological role, cytochrome b562 is an integral component of the cytochrome b-c1 complex in the cyclic electron transfer system of photosynthetic bacteria. In Cereibacter sphaeroides (strain ATCC 17023 / DSM 158 / JCM 6121 / CCUG 31486 / LMG 2827 / NBRC 12203 / NCIMB 8253 / ATH 2.4.1.) (Rhodobacter sphaeroides), this protein is Cytochrome b562.